The following is a 224-amino-acid chain: Pro-thyrotropin-releasing hormone-B (224 aa).

Residues 1–15 (MMFLWWLLLLGTAIS) form the signal peptide. The residue at position 75 (Gln-75) is a Pyrrolidone carboxylic acid. A Proline amide modification is found at Pro-77. Residues 86-101 (EKRQHPGKRDLEDLQL) show a composition bias toward basic and acidic residues. Disordered stretches follow at residues 86–131 (EKRQ…DWSR) and 150–212 (RQHP…NSGN). A Pyrrolidone carboxylic acid modification is found at Gln-89. Pro-91 is subject to Proline amide. Gln-105 is modified (pyrrolidone carboxylic acid). Pro-107 is subject to Proline amide. Positions 110-129 (RYLEDMEKRQHPGKREEGDW) are enriched in basic and acidic residues. Pyrrolidone carboxylic acid is present on Gln-119. At Pro-121 the chain carries Proline amide. Gln-151 is modified (pyrrolidone carboxylic acid). At Pro-153 the chain carries Proline amide. Gln-166 is modified (pyrrolidone carboxylic acid). Pro-168 carries the post-translational modification Proline amide. Over residues 182–199 (ENSKEVGKRQHPGKRYDP) the composition is skewed to basic and acidic residues. Gln-191 is modified (pyrrolidone carboxylic acid). Residue Pro-193 is modified to Proline amide.

This sequence belongs to the TRH family.

It is found in the secreted. In Xenopus laevis (African clawed frog), this protein is Pro-thyrotropin-releasing hormone-B (trh-b).